Here is a 298-residue protein sequence, read N- to C-terminus: Lipoyl synthase (298 aa).

[4Fe-4S] cluster contacts are provided by cysteine 43, cysteine 48, cysteine 54, cysteine 69, cysteine 73, cysteine 76, and serine 280. A Radical SAM core domain is found at phenylalanine 55–proline 269.

It belongs to the radical SAM superfamily. Lipoyl synthase family. The cofactor is [4Fe-4S] cluster.

It localises to the cytoplasm. It carries out the reaction [[Fe-S] cluster scaffold protein carrying a second [4Fe-4S](2+) cluster] + N(6)-octanoyl-L-lysyl-[protein] + 2 oxidized [2Fe-2S]-[ferredoxin] + 2 S-adenosyl-L-methionine + 4 H(+) = [[Fe-S] cluster scaffold protein] + N(6)-[(R)-dihydrolipoyl]-L-lysyl-[protein] + 4 Fe(3+) + 2 hydrogen sulfide + 2 5'-deoxyadenosine + 2 L-methionine + 2 reduced [2Fe-2S]-[ferredoxin]. It participates in protein modification; protein lipoylation via endogenous pathway; protein N(6)-(lipoyl)lysine from octanoyl-[acyl-carrier-protein]: step 2/2. Its function is as follows. Catalyzes the radical-mediated insertion of two sulfur atoms into the C-6 and C-8 positions of the octanoyl moiety bound to the lipoyl domains of lipoate-dependent enzymes, thereby converting the octanoylated domains into lipoylated derivatives. The sequence is that of Lipoyl synthase from Nitratidesulfovibrio vulgaris (strain DP4) (Desulfovibrio vulgaris).